A 315-amino-acid polypeptide reads, in one-letter code: tRNA dimethylallyltransferase (315 aa).

An ATP-binding site is contributed by 13 to 20 (GPTAVGKT). 15–20 (TAVGKT) provides a ligand contact to substrate. An interaction with substrate tRNA region spans residues 38–41 (DSMQ).

The protein belongs to the IPP transferase family. In terms of assembly, monomer. The cofactor is Mg(2+).

The catalysed reaction is adenosine(37) in tRNA + dimethylallyl diphosphate = N(6)-dimethylallyladenosine(37) in tRNA + diphosphate. In terms of biological role, catalyzes the transfer of a dimethylallyl group onto the adenine at position 37 in tRNAs that read codons beginning with uridine, leading to the formation of N6-(dimethylallyl)adenosine (i(6)A). The sequence is that of tRNA dimethylallyltransferase from Staphylococcus saprophyticus subsp. saprophyticus (strain ATCC 15305 / DSM 20229 / NCIMB 8711 / NCTC 7292 / S-41).